A 201-amino-acid polypeptide reads, in one-letter code: ATP-dependent Clp protease proteolytic subunit (201 aa).

Residue serine 101 is the Nucleophile of the active site. Histidine 126 is an active-site residue.

This sequence belongs to the peptidase S14 family. In terms of assembly, component of the chloroplastic Clp protease core complex.

It is found in the plastid. The protein localises to the chloroplast stroma. The catalysed reaction is Hydrolysis of proteins to small peptides in the presence of ATP and magnesium. alpha-casein is the usual test substrate. In the absence of ATP, only oligopeptides shorter than five residues are hydrolyzed (such as succinyl-Leu-Tyr-|-NHMec, and Leu-Tyr-Leu-|-Tyr-Trp, in which cleavage of the -Tyr-|-Leu- and -Tyr-|-Trp bonds also occurs).. Its function is as follows. Cleaves peptides in various proteins in a process that requires ATP hydrolysis. Has a chymotrypsin-like activity. Plays a major role in the degradation of misfolded proteins. The sequence is that of ATP-dependent Clp protease proteolytic subunit from Staurastrum punctulatum (Green alga).